Reading from the N-terminus, the 514-residue chain is Cytochrome P450 monooxygenase MO6277 (514 aa).

A helical transmembrane segment spans residues 6-26; the sequence is LTVLALLGGTLLLYCSGLVIY. Residue Cys457 coordinates heme.

The protein belongs to the cytochrome P450 family. Requires heme as cofactor.

The protein resides in the membrane. It carries out the reaction polyporic acid + reduced [NADPH--hemoprotein reductase] + O2 = ascocorynin + oxidized [NADPH--hemoprotein reductase] + H2O + H(+). The protein operates within secondary metabolite biosynthesis. In terms of biological role, cytochrome P450 monooxygenase that hydroxylates polyporic acid produced by the nonribosomal peptide synthetase acyN to produce the less toxic metabolite ascocorynin. The hydrophobic substrate polyporic acid might approach the active site from the membrane and, after hydroxylation into ascocorynin, leaves into the cytoplasm. MO6277 appears vital to avoid high-level accumulation of polyporic acid in the fungal membrane. The polypeptide is Cytochrome P450 monooxygenase MO6277 (Ascocoryne sarcoides (Purple jellydisc fungus)).